Reading from the N-terminus, the 118-residue chain is Small ribosomal subunit protein uS13 (118 aa).

A disordered region spans residues 94–118 (GLPVRGQRTKTNARTRKGPRKPIKK).

It belongs to the universal ribosomal protein uS13 family. As to quaternary structure, part of the 30S ribosomal subunit. Forms a loose heterodimer with protein S19. Forms two bridges to the 50S subunit in the 70S ribosome.

Functionally, located at the top of the head of the 30S subunit, it contacts several helices of the 16S rRNA. In the 70S ribosome it contacts the 23S rRNA (bridge B1a) and protein L5 of the 50S subunit (bridge B1b), connecting the 2 subunits; these bridges are implicated in subunit movement. Contacts the tRNAs in the A and P-sites. The chain is Small ribosomal subunit protein uS13 from Histophilus somni (strain 129Pt) (Haemophilus somnus).